A 1206-amino-acid chain; its full sequence is DNA-directed RNA polymerase subunit beta' (1206 aa).

Zn(2+)-binding residues include cysteine 60, cysteine 62, cysteine 75, and cysteine 78. Positions 449, 451, and 453 each coordinate Mg(2+). Zn(2+) is bound by residues cysteine 818, cysteine 892, cysteine 899, and cysteine 902.

This sequence belongs to the RNA polymerase beta' chain family. The RNAP catalytic core consists of 2 alpha, 1 beta, 1 beta' and 1 omega subunit. When a sigma factor is associated with the core the holoenzyme is formed, which can initiate transcription. The cofactor is Mg(2+). Zn(2+) serves as cofactor.

It carries out the reaction RNA(n) + a ribonucleoside 5'-triphosphate = RNA(n+1) + diphosphate. Functionally, DNA-dependent RNA polymerase catalyzes the transcription of DNA into RNA using the four ribonucleoside triphosphates as substrates. This Halalkalibacterium halodurans (strain ATCC BAA-125 / DSM 18197 / FERM 7344 / JCM 9153 / C-125) (Bacillus halodurans) protein is DNA-directed RNA polymerase subunit beta'.